The following is a 476-amino-acid chain: Serine--tRNA ligase (476 aa).

Residue 280 to 282 (TAE) coordinates L-serine. Residue 311–313 (RAE) coordinates ATP. Glutamate 334 is an L-serine binding site. 401–404 (EISS) provides a ligand contact to ATP. Serine 436 contributes to the L-serine binding site.

This sequence belongs to the class-II aminoacyl-tRNA synthetase family. Type-1 seryl-tRNA synthetase subfamily. As to quaternary structure, homodimer. The tRNA molecule binds across the dimer.

It is found in the cytoplasm. It catalyses the reaction tRNA(Ser) + L-serine + ATP = L-seryl-tRNA(Ser) + AMP + diphosphate + H(+). The enzyme catalyses tRNA(Sec) + L-serine + ATP = L-seryl-tRNA(Sec) + AMP + diphosphate + H(+). It participates in aminoacyl-tRNA biosynthesis; selenocysteinyl-tRNA(Sec) biosynthesis; L-seryl-tRNA(Sec) from L-serine and tRNA(Sec): step 1/1. Its function is as follows. Catalyzes the attachment of serine to tRNA(Ser). Is also able to aminoacylate tRNA(Sec) with serine, to form the misacylated tRNA L-seryl-tRNA(Sec), which will be further converted into selenocysteinyl-tRNA(Sec). The polypeptide is Serine--tRNA ligase (Rhodopseudomonas palustris (strain HaA2)).